Consider the following 106-residue polypeptide: Nucleoid-associated protein DP1429 (106 aa).

This sequence belongs to the YbaB/EbfC family. In terms of assembly, homodimer.

It localises to the cytoplasm. Its subcellular location is the nucleoid. In terms of biological role, binds to DNA and alters its conformation. May be involved in regulation of gene expression, nucleoid organization and DNA protection. The sequence is that of Nucleoid-associated protein DP1429 from Desulfotalea psychrophila (strain LSv54 / DSM 12343).